The following is an 88-amino-acid chain: Homeobox protein knotted-1-like 3 (88 aa).

An ELK domain is found at E4–L24. The homeobox; TALE-type DNA-binding region spans C25–S88.

It belongs to the TALE/KNOX homeobox family. Strongly expressed in ear inflorescence primordia and shoot meristem. Weakly expressed in embryos. Absent from leaves.

The protein localises to the nucleus. Functionally, probably binds to the DNA sequence 5'-TGAC-3'. The polypeptide is Homeobox protein knotted-1-like 3 (KNOX3) (Zea mays (Maize)).